The primary structure comprises 81 residues: MRLFLSLLVVVLSIVLEGPTPAQGVPDVSNPFDVLEEFGKTLEDNVREFINLITQSELPAKTRDWFSETFRKVKEKLKINS.

The signal sequence occupies residues 1-24 (MRLFLSLLVVVLSIVLEGPTPAQG).

It belongs to the apolipoprotein C1 family.

It is found in the secreted. In Cercocebus atys (Sooty mangabey), this protein is Apolipoprotein C-I, acidic form (APOC1A).